The following is a 389-amino-acid chain: Phospho-N-acetylmuramoyl-pentapeptide-transferase (389 aa).

10 helical membrane-spanning segments follow: residues 25–45 (RAVMATITALLIGLVCGPAVI), 73–93 (TMGGVLILLGIAVATLLWADL), 97–117 (FIWIVMLVTFGFGVIGWVDDY), 135–155 (FWQSVIGLFAAVYLAFSVSEA), 190–210 (ISYPLGVWGFIVLTYLVIVGA), 222–242 (GLVIMPVVLVGASLGVFAYVM), 259–279 (AGELLIFCSAMGGAGLAFLWF), 287–307 (FMGDVGALALGGALGTVAVIV), 311–331 (IVLFIMGGIFVAETLSVMLQV), and 366–386 (QVVVRFWIITLMLCLFGLSTL).

It belongs to the glycosyltransferase 4 family. MraY subfamily. The cofactor is Mg(2+).

Its subcellular location is the cell inner membrane. It catalyses the reaction UDP-N-acetyl-alpha-D-muramoyl-L-alanyl-gamma-D-glutamyl-meso-2,6-diaminopimeloyl-D-alanyl-D-alanine + di-trans,octa-cis-undecaprenyl phosphate = di-trans,octa-cis-undecaprenyl diphospho-N-acetyl-alpha-D-muramoyl-L-alanyl-D-glutamyl-meso-2,6-diaminopimeloyl-D-alanyl-D-alanine + UMP. It functions in the pathway cell wall biogenesis; peptidoglycan biosynthesis. Its function is as follows. Catalyzes the initial step of the lipid cycle reactions in the biosynthesis of the cell wall peptidoglycan: transfers peptidoglycan precursor phospho-MurNAc-pentapeptide from UDP-MurNAc-pentapeptide onto the lipid carrier undecaprenyl phosphate, yielding undecaprenyl-pyrophosphoryl-MurNAc-pentapeptide, known as lipid I. The polypeptide is Phospho-N-acetylmuramoyl-pentapeptide-transferase (Paraburkholderia phytofirmans (strain DSM 17436 / LMG 22146 / PsJN) (Burkholderia phytofirmans)).